A 188-amino-acid polypeptide reads, in one-letter code: GMP synthase [glutamine-hydrolyzing] subunit A (188 aa).

One can recognise a Glutamine amidotransferase type-1 domain in the interval 1–188; the sequence is MIVILDNGGQ…FCKVCGYKFE (188 aa). Cys-76 acts as the Nucleophile in catalysis. Active-site residues include His-163 and Glu-165.

In terms of assembly, heterodimer composed of a glutamine amidotransferase subunit (A) and a GMP-binding subunit (B).

The enzyme catalyses XMP + L-glutamine + ATP + H2O = GMP + L-glutamate + AMP + diphosphate + 2 H(+). It functions in the pathway purine metabolism; GMP biosynthesis; GMP from XMP (L-Gln route): step 1/1. Functionally, catalyzes the synthesis of GMP from XMP. The chain is GMP synthase [glutamine-hydrolyzing] subunit A from Methanocaldococcus jannaschii (strain ATCC 43067 / DSM 2661 / JAL-1 / JCM 10045 / NBRC 100440) (Methanococcus jannaschii).